Here is a 336-residue protein sequence, read N- to C-terminus: Cell division protein ZipA (336 aa).

At 1-6 (MMQDLR) the chain is on the periplasmic side. The helical transmembrane segment at 7–27 (LILIVVGAIAIIALLLHGLWT) threads the bilayer. The Cytoplasmic portion of the chain corresponds to 28-336 (SRKERSSLFR…RIRDVLKANA (309 aa)). Residues 40 to 51 (PVKRAKKARDET) show a composition bias toward basic and acidic residues. The interval 40–190 (PVKRAKKARD…APAQPQQPAE (151 aa)) is disordered. Over residues 76 to 89 (SFSSSSFDNASFDN) the composition is skewed to low complexity. Polar residues predominate over residues 126-138 (PRSQVRGDSNPQV). A compositionally biased stretch (low complexity) spans 179–190 (QPAPAQPQQPAE).

It belongs to the ZipA family. Interacts with FtsZ via their C-terminal domains.

Its subcellular location is the cell inner membrane. In terms of biological role, essential cell division protein that stabilizes the FtsZ protofilaments by cross-linking them and that serves as a cytoplasmic membrane anchor for the Z ring. Also required for the recruitment to the septal ring of downstream cell division proteins. The polypeptide is Cell division protein ZipA (Pectobacterium carotovorum subsp. carotovorum (strain PC1)).